The chain runs to 340 residues: Anthocyanidin reductase (340 aa).

2 residues coordinate NADP(+): K49 and Y169.

This sequence belongs to the NAD(P)-dependent epimerase/dehydratase family. Dihydroflavonol-4-reductase subfamily. Homo- or heterodimer. Flowers and young siliques. Detected specifically in the endothelium of seed coat.

The catalysed reaction is a (2R,3R)-flavan-3-ol + 2 NAD(+) = an anthocyanidin with a 3-hydroxy group + 2 NADH + 2 H(+). It carries out the reaction a (2R,3R)-flavan-3-ol + 2 NADP(+) = an anthocyanidin with a 3-hydroxy group + 2 NADPH + 2 H(+). It functions in the pathway secondary metabolite biosynthesis; flavonoid biosynthesis. Its activity is regulated as follows. Inhibited by (+)-catechin, quercetin and (+)- and (-)-dihydroquercetin. Not inhibited by salt. Positive cooperativity with NADPH acting as cosubstrate and modulator. Functionally, involved in the biosynthesis of condensed tannins. Converts cyanidin into (-)-epicatechin as the major product. This chain is Anthocyanidin reductase (BAN), found in Arabidopsis thaliana (Mouse-ear cress).